Consider the following 249-residue polypeptide: Glucosamine-6-phosphate deaminase 2 (249 aa).

Catalysis depends on Asp-67, which acts as the Proton acceptor; for enolization step. The For ring-opening step role is filled by Asn-136. Catalysis depends on His-138, which acts as the Proton acceptor; for ring-opening step. The For ring-opening step role is filled by Glu-143.

Belongs to the glucosamine/galactosamine-6-phosphate isomerase family. NagB subfamily.

It catalyses the reaction alpha-D-glucosamine 6-phosphate + H2O = beta-D-fructose 6-phosphate + NH4(+). The protein operates within amino-sugar metabolism; N-acetylneuraminate degradation; D-fructose 6-phosphate from N-acetylneuraminate: step 5/5. In terms of biological role, catalyzes the reversible isomerization-deamination of glucosamine 6-phosphate (GlcN6P) to form fructose 6-phosphate (Fru6P) and ammonium ion. Required for growth on glucosamine and also provides the majority of GlcN6P deaminase activity during growth on N-acetylglucosamine (GlcNAc). This Bacillus subtilis (strain 168) protein is Glucosamine-6-phosphate deaminase 2.